We begin with the raw amino-acid sequence, 934 residues long: Bifunctional uridylyltransferase/uridylyl-removing enzyme (934 aa).

The uridylyltransferase stretch occupies residues 1–379 (MSAHDLKLEE…TFSRRKRKLS (379 aa)). The uridylyl-removing stretch occupies residues 380–736 (DDGAFISENH…AKPHAFEAVT (357 aa)). The 118-residue stretch at 496-613 (VDEHLLRCIA…IDFADTVQTM (118 aa)) folds into the HD domain. 2 ACT domains span residues 737–818 (EITV…DMLA) and 848–931 (VIEV…RSPQ).

This sequence belongs to the GlnD family. Mg(2+) is required as a cofactor.

It carries out the reaction [protein-PII]-L-tyrosine + UTP = [protein-PII]-uridylyl-L-tyrosine + diphosphate. It catalyses the reaction [protein-PII]-uridylyl-L-tyrosine + H2O = [protein-PII]-L-tyrosine + UMP + H(+). With respect to regulation, uridylyltransferase (UTase) activity is inhibited by glutamine, while glutamine activates uridylyl-removing (UR) activity. In terms of biological role, modifies, by uridylylation and deuridylylation, the PII regulatory proteins (GlnB and homologs), in response to the nitrogen status of the cell that GlnD senses through the glutamine level. Under low glutamine levels, catalyzes the conversion of the PII proteins and UTP to PII-UMP and PPi, while under higher glutamine levels, GlnD hydrolyzes PII-UMP to PII and UMP (deuridylylation). Thus, controls uridylylation state and activity of the PII proteins, and plays an important role in the regulation of nitrogen assimilation and metabolism. The sequence is that of Bifunctional uridylyltransferase/uridylyl-removing enzyme from Brucella ovis (strain ATCC 25840 / 63/290 / NCTC 10512).